The primary structure comprises 383 residues: Queuine tRNA-ribosyltransferase (383 aa).

Catalysis depends on Asp-95, which acts as the Proton acceptor. Substrate contacts are provided by residues 95 to 99, Asp-149, Gln-195, and Gly-222; that span reads DSGGF. Positions 253 to 259 are RNA binding; the sequence is GVGSPDS. Asp-272 acts as the Nucleophile in catalysis. An RNA binding; important for wobble base 34 recognition region spans residues 277–281; that stretch reads TRIAR. Positions 310, 312, 315, and 341 each coordinate Zn(2+).

The protein belongs to the queuine tRNA-ribosyltransferase family. In terms of assembly, homodimer. Within each dimer, one monomer is responsible for RNA recognition and catalysis, while the other monomer binds to the replacement base PreQ1. The cofactor is Zn(2+).

It catalyses the reaction 7-aminomethyl-7-carbaguanine + guanosine(34) in tRNA = 7-aminomethyl-7-carbaguanosine(34) in tRNA + guanine. It participates in tRNA modification; tRNA-queuosine biosynthesis. Functionally, catalyzes the base-exchange of a guanine (G) residue with the queuine precursor 7-aminomethyl-7-deazaguanine (PreQ1) at position 34 (anticodon wobble position) in tRNAs with GU(N) anticodons (tRNA-Asp, -Asn, -His and -Tyr). Catalysis occurs through a double-displacement mechanism. The nucleophile active site attacks the C1' of nucleotide 34 to detach the guanine base from the RNA, forming a covalent enzyme-RNA intermediate. The proton acceptor active site deprotonates the incoming PreQ1, allowing a nucleophilic attack on the C1' of the ribose to form the product. After dissociation, two additional enzymatic reactions on the tRNA convert PreQ1 to queuine (Q), resulting in the hypermodified nucleoside queuosine (7-(((4,5-cis-dihydroxy-2-cyclopenten-1-yl)amino)methyl)-7-deazaguanosine). In Shouchella clausii (strain KSM-K16) (Alkalihalobacillus clausii), this protein is Queuine tRNA-ribosyltransferase.